Reading from the N-terminus, the 285-residue chain is Protein unc-1 (285 aa).

Transmembrane regions (helical) follow at residues 27 to 47 (IGTIFGYALQALSWILIIVTF) and 69 to 89 (IGRLVFGGARGPGMIFIIPCI).

The protein belongs to the band 7/mec-2 family.

The protein resides in the cell membrane. The protein localises to the cell junction. It localises to the gap junction. This Caenorhabditis elegans protein is Protein unc-1 (unc-1).